The following is a 262-amino-acid chain: Troponin T, slow skeletal muscle (262 aa).

The segment covering 1–31 has biased composition (acidic residues); it reads MSDAEEQEYEEEQPEEEEAAEEEEAPEEPEP. 3 disordered regions span residues 1 to 59, 107 to 153, and 165 to 197; these read MSDA…PEGE, RAER…KKKV, and LVKAEQKRGKRQTGREMKQRILSERKKPLNIDH. S2 is subject to Phosphoserine; by CK2. Residues 32–41 are compositionally biased toward basic and acidic residues; the sequence is VAEREEERPK. Residues 43-55 are compositionally biased toward pro residues; the sequence is SRPVVPPLIPPKI. Basic and acidic residues-rich tracts occupy residues 107–149 and 177–197; these read RAER…DDAK and TGREMKQRILSERKKPLNIDH.

Belongs to the troponin T family. In terms of assembly, interacts with TPM3.

Functionally, troponin T is the tropomyosin-binding subunit of troponin, the thin filament regulatory complex which confers calcium-sensitivity to striated muscle actomyosin ATPase activity. This is Troponin T, slow skeletal muscle (TNNT1) from Sus scrofa (Pig).